The chain runs to 137 residues: Large ribosomal subunit protein uL16 (137 aa).

The segment at 1–22 is disordered; sequence MLQPKRTKFRKVQKGRNRGLAH.

It belongs to the universal ribosomal protein uL16 family. Part of the 50S ribosomal subunit.

In terms of biological role, binds 23S rRNA and is also seen to make contacts with the A and possibly P site tRNAs. The polypeptide is Large ribosomal subunit protein uL16 (Chromohalobacter salexigens (strain ATCC BAA-138 / DSM 3043 / CIP 106854 / NCIMB 13768 / 1H11)).